A 253-amino-acid chain; its full sequence is Sulfate transporter CysZ (253 aa).

4 helical membrane passes run 31-51 (FVIL…WWLF), 75-95 (LLWP…FSTI), 151-171 (IVLL…PVLW), and 222-242 (IPLL…AMWV).

This sequence belongs to the CysZ family.

It is found in the cell inner membrane. Its function is as follows. High affinity, high specificity proton-dependent sulfate transporter, which mediates sulfate uptake. Provides the sulfur source for the cysteine synthesis pathway. The chain is Sulfate transporter CysZ from Shigella flexneri.